The chain runs to 466 residues: Argininosuccinate lyase (466 aa).

The protein belongs to the lyase 1 family. Argininosuccinate lyase subfamily.

It localises to the cytoplasm. It carries out the reaction 2-(N(omega)-L-arginino)succinate = fumarate + L-arginine. Its pathway is amino-acid biosynthesis; L-arginine biosynthesis; L-arginine from L-ornithine and carbamoyl phosphate: step 3/3. The sequence is that of Argininosuccinate lyase from Bartonella tribocorum (strain CIP 105476 / IBS 506).